A 682-amino-acid polypeptide reads, in one-letter code: Methionine--tRNA ligase (682 aa).

The 'HIGH' region motif lies at 12–22 (PYANGAIHLGH). Zn(2+) contacts are provided by Cys143, Cys146, Cys156, and Cys159. The 'KMSKS' region signature appears at 328-332 (KMSKS). Lys331 serves as a coordination point for ATP. The tRNA-binding domain maps to 580 to 682 (DFAKLDLRVA…EGIRPGMQVK (103 aa)).

It belongs to the class-I aminoacyl-tRNA synthetase family. MetG type 1 subfamily. In terms of assembly, homodimer. Requires Zn(2+) as cofactor.

The protein localises to the cytoplasm. The catalysed reaction is tRNA(Met) + L-methionine + ATP = L-methionyl-tRNA(Met) + AMP + diphosphate. Is required not only for elongation of protein synthesis but also for the initiation of all mRNA translation through initiator tRNA(fMet) aminoacylation. This Actinobacillus pleuropneumoniae serotype 7 (strain AP76) protein is Methionine--tRNA ligase.